We begin with the raw amino-acid sequence, 563 residues long: Pyruvate decarboxylase isozyme 1 (563 aa).

Ser-2 bears the N-acetylserine mark. The pyruvate site is built by Asp-28, His-115, and Tyr-157. Arg-161 bears the Omega-N-methylarginine mark. Lys-212 is covalently cross-linked (Glycyl lysine isopeptide (Lys-Gly) (interchain with G-Cter in ubiquitin)). Ser-223 carries the post-translational modification Phosphoserine. Arg-224 serves as a coordination point for pyruvate. Residue Lys-233 forms a Glycyl lysine isopeptide (Lys-Gly) (interchain with G-Cter in ubiquitin) linkage. Position 266 is a phosphothreonine (Thr-266). Residues Lys-269 and Lys-332 each participate in a glycyl lysine isopeptide (Lys-Gly) (interchain with G-Cter in ubiquitin) cross-link. Phosphothreonine occurs at positions 336 and 353. Thiamine diphosphate-binding positions include Thr-390 and 413 to 415; that span reads GSI. Asp-444 lines the Mg(2+) pocket. Thiamine diphosphate-binding positions include 445 to 446 and 471 to 476; these read GS and NDGYTI. Mg(2+) is bound by residues Asn-471 and Gly-473. Glu-477 serves as a coordination point for pyruvate. Glycyl lysine isopeptide (Lys-Gly) (interchain with G-Cter in ubiquitin) cross-links involve residues Lys-484, Lys-505, and Lys-520. Thr-522 is subject to Phosphothreonine. Ser-526 is modified (phosphoserine).

The protein belongs to the TPP enzyme family. In terms of assembly, homotetramer. Requires Mg(2+) as cofactor. The cofactor is thiamine diphosphate. Post-translationally, cleavage of N-terminal methionine and N-terminal acetylation by NAT1/ARD1.

The protein resides in the cytoplasm. It localises to the nucleus. It catalyses the reaction pyruvate + H(+) = acetaldehyde + CO2. The catalysed reaction is 3-methyl-2-oxobutanoate + H(+) = 2-methylpropanal + CO2. It carries out the reaction (S)-3-methyl-2-oxopentanoate + H(+) = 2-methylbutanal + CO2. The enzyme catalyses indole-3-pyruvate + H(+) = indole-3-acetaldehyde + CO2. It catalyses the reaction 3-phenylpyruvate + H(+) = 2-phenylacetaldehyde + CO2. The catalysed reaction is 2-oxobutanoate + H(+) = propanal + CO2. It carries out the reaction 2-oxopentanoate + H(+) = butanal + CO2. The enzyme catalyses 2 acetaldehyde = acetoin. It catalyses the reaction acetaldehyde + pyruvate + H(+) = acetoin + CO2. Its pathway is fermentation; ethanol fermentation. It functions in the pathway amino-acid degradation; Ehrlich pathway. Allosterically activated by its substrate, pyruvate. In terms of biological role, major of three pyruvate decarboxylases (PDC1, PDC5, PDC6) implicated in the nonoxidative conversion of pyruvate to acetaldehyde and carbon dioxide during alcoholic fermentation. Most of the produced acetaldehyde is subsequently reduced to ethanol, but some is required for cytosolic acetyl-CoA production for biosynthetic pathways. The enzyme is also one of five 2-oxo acid decarboxylases (PDC1, PDC5, PDC6, ARO10, and THI3) able to decarboxylate more complex 2-oxo acids (alpha-ketoacids) than pyruvate, which seem mainly involved in amino acid catabolism. Here the enzyme catalyzes the decarboxylation of amino acids, which, in a first step, have been transaminated to the corresponding 2-oxo acids. In a third step, the resulting aldehydes are reduced to alcohols, collectively referred to as fusel oils or alcohols. Its preferred substrates are the transaminated amino acids derived from threonine (2-oxobutanoate), norvaline (2-oxopentanoate), valine (3-methyl-2-oxobutanoate, also alpha-keto-isovalerate), isoleucine ((3S)-3-methyl-2-oxopentanoate, also alpha-keto-beta-methylvalerate), phenylalanine (phenylpyruvate), and tryptophan (3-(indol-3-yl)pyruvate), whereas transaminated leucine is no substrate. In a side-reaction the carbanionic intermediate (or active aldehyde) generated by decarboxylation or by activation of an aldehyde can react with an aldehyde via condensation (or carboligation) yielding a 2-hydroxy ketone, collectively called acyloins. The chain is Pyruvate decarboxylase isozyme 1 from Saccharomyces cerevisiae (strain ATCC 204508 / S288c) (Baker's yeast).